Reading from the N-terminus, the 349-residue chain is GMP reductase (349 aa).

108-131 is an NADP(+) binding site; it reads IDFLKIKKIFLLSSELKYICIDVA. K(+) contacts are provided by Gly181 and Gly183. Cys186 (thioimidate intermediate) is an active-site residue. An NADP(+)-binding site is contributed by 216–239; it reads IISDGGCTVSGDIAKAFGGGADFV.

Belongs to the IMPDH/GMPR family. GuaC type 1 subfamily. As to quaternary structure, homotetramer.

The catalysed reaction is IMP + NH4(+) + NADP(+) = GMP + NADPH + 2 H(+). Its function is as follows. Catalyzes the irreversible NADPH-dependent deamination of GMP to IMP. It functions in the conversion of nucleobase, nucleoside and nucleotide derivatives of G to A nucleotides, and in maintaining the intracellular balance of A and G nucleotides. This is GMP reductase from Buchnera aphidicola subsp. Acyrthosiphon pisum (strain 5A).